Consider the following 108-residue polypeptide: Iron-sulfur cluster assembly protein CyaY (108 aa).

This sequence belongs to the frataxin family.

Its function is as follows. Involved in iron-sulfur (Fe-S) cluster assembly. May act as a regulator of Fe-S biogenesis. The protein is Iron-sulfur cluster assembly protein CyaY of Pseudomonas aeruginosa (strain ATCC 15692 / DSM 22644 / CIP 104116 / JCM 14847 / LMG 12228 / 1C / PRS 101 / PAO1).